The chain runs to 2298 residues: Protein Ycf2 (2298 aa).

1652–1659 lines the ATP pocket; that stretch reads GSIGTGRS.

This sequence belongs to the Ycf2 family.

It localises to the plastid. It is found in the chloroplast stroma. Probable ATPase of unknown function. Its presence in a non-photosynthetic plant (Epifagus virginiana) and experiments in tobacco indicate that it has an essential function which is probably not related to photosynthesis. This chain is Protein Ycf2, found in Aethionema cordifolium (Lebanon stonecress).